We begin with the raw amino-acid sequence, 212 residues long: Fe/S biogenesis protein NfuA (212 aa).

2 residues coordinate [4Fe-4S] cluster: C169 and C172.

Belongs to the NfuA family. As to quaternary structure, homodimer. [4Fe-4S] cluster is required as a cofactor.

Functionally, involved in iron-sulfur cluster biogenesis. Binds a 4Fe-4S cluster, can transfer this cluster to apoproteins, and thereby intervenes in the maturation of Fe/S proteins. Could also act as a scaffold/chaperone for damaged Fe/S proteins. This chain is Fe/S biogenesis protein NfuA, found in Acinetobacter baumannii (strain AB307-0294).